The following is a 326-amino-acid chain: ATP synthase subunit b 2 (326 aa).

The chain crosses the membrane as a helical span at residues 2-22; sequence LIDWFTVVAQALNFLILVWLL. Basic and acidic residues-rich tracts occupy residues 275–298 and 306–326; these read QQGR…RKEN and PPPE…IGSP. A disordered region spans residues 275–326; sequence QQGRKEGRAVQNWDKAESEIRKENLSPAKTEPPPEAKAKPKPEEPKPEIGSP.

This sequence belongs to the ATPase B chain family. In terms of assembly, F-type ATPases have 2 components, F(1) - the catalytic core - and F(0) - the membrane proton channel. F(1) has five subunits: alpha(3), beta(3), gamma(1), delta(1), epsilon(1). F(0) has three main subunits: a(1), b(2) and c(10-14). The alpha and beta chains form an alternating ring which encloses part of the gamma chain. F(1) is attached to F(0) by a central stalk formed by the gamma and epsilon chains, while a peripheral stalk is formed by the delta and b chains.

It is found in the cell inner membrane. In terms of biological role, f(1)F(0) ATP synthase produces ATP from ADP in the presence of a proton or sodium gradient. F-type ATPases consist of two structural domains, F(1) containing the extramembraneous catalytic core and F(0) containing the membrane proton channel, linked together by a central stalk and a peripheral stalk. During catalysis, ATP synthesis in the catalytic domain of F(1) is coupled via a rotary mechanism of the central stalk subunits to proton translocation. Component of the F(0) channel, it forms part of the peripheral stalk, linking F(1) to F(0). In Albidiferax ferrireducens (strain ATCC BAA-621 / DSM 15236 / T118) (Rhodoferax ferrireducens), this protein is ATP synthase subunit b 2.